Reading from the N-terminus, the 444-residue chain is Cytokine receptor-like factor 3 (444 aa).

A coiled-coil region spans residues 1–65 (MSIEAEALLQ…QELQTAVSRL (65 aa)). Positions 177-270 (PPVQIEELVE…PQTGYTTLAP (94 aa)) constitute a Fibronectin type-III domain.

Belongs to the cytokine receptor-like factor 3 family.

It localises to the cytoplasm. May play a role in the negative regulation of cell cycle progression. The protein is Cytokine receptor-like factor 3 (crlf3) of Danio rerio (Zebrafish).